Consider the following 273-residue polypeptide: MMHRLNLNGYEPDRHHEAAVAFCIHAGTDELTSPVHQHRKGQLILALHGAITCTVENALWMVPPQYAVWIPGGVEHSNQVTANAELCFLFIEPSAVTMPTTCCTLKISPLCRELILTLANRTTTQRAEPMTRRLIQVLFDELPQQPQQQLHLPVSSHPKIRTMVEMMAKGPVEWGALGQWAGFFAMSERNLARLIVKETGLSFRQWRQQLQLIMALQGLVKGDTVQKVAHTLGYDSTTAFITMFKKGLGQTPGRYIARLTTVSPQSAKPDPRQ.

An HTH araC/xylS-type domain is found at 158-258 (PKIRTMVEMM…GQTPGRYIAR (101 aa)). DNA-binding regions (H-T-H motif) lie at residues 178–199 (GQWAGFFAMSERNLARLIVKET) and 225–248 (VQKVAHTLGYDSTTAFITMFKKGL).

Functionally, negatively regulates expression of the nimT operon and its own expression. Acts by binding to the nimR-nimT intergenic region. The chain is HTH-type transcriptional regulator NimR from Escherichia coli (strain K12).